The sequence spans 137 residues: Profilin-3 (137 aa).

The protein belongs to the profilin family. In terms of assembly, interacts with ACTRT3.

The protein localises to the cytoplasm. It is found in the cytoskeleton. It localises to the nucleus. Its function is as follows. Binds to actin and affects the structure of the cytoskeleton. Binds to poly-L-proline, phosphatidylinositol 3-phosphate (PtdIns(3)P), phosphatidylinositol 4,5-bisphosphate (PtdIns(4,5)P2) and phosphatidylinositol 4-phosphate (PtdIns(4)P). Slightly reduces actin polymerization. May be involved in spermatogenesis. This Bos taurus (Bovine) protein is Profilin-3 (PFN3).